Here is a 103-residue protein sequence, read N- to C-terminus: Putative ribosomal RNA-processing protein 7 homolog B (103 aa).

Residues 1–19 (MEAYDQKIAEEEAKAKEEE) show a composition bias toward basic and acidic residues. The segment at 1 to 25 (MEAYDQKIAEEEAKAKEEEGVPDEE) is disordered. Positions 71-100 (ESKMEHLAQLRKKFEEDKQRIELLRAQRKF) form a coiled coil.

Belongs to the RRP7 family.

The polypeptide is Putative ribosomal RNA-processing protein 7 homolog B (Homo sapiens (Human)).